The chain runs to 93 residues: MSSSTPKDTVDTAETPKVKDPESQAWSDDKRRKFETKSKSEFYDPCQEAAQASYRCLFRNGGDKNMCGEYFQAYRDCKQEWTEKRRREGRGWF.

Positions Met-1–Ser-40 are disordered. Over residues Asp-8 to Ser-40 the composition is skewed to basic and acidic residues. The CHCH domain occupies Tyr-43 to Arg-85. Short sequence motifs (cx9C motif) lie at residues Cys-46–Cys-56 and Cys-67–Cys-77. 2 cysteine pairs are disulfide-bonded: Cys-46–Cys-77 and Cys-56–Cys-67.

Belongs to the COX23 family.

It localises to the mitochondrion intermembrane space. Its function is as follows. Required for the assembly of cytochrome c oxidase. The protein is Cytochrome c oxidase-assembly factor COX23, mitochondrial (COX23) of Gibberella zeae (strain ATCC MYA-4620 / CBS 123657 / FGSC 9075 / NRRL 31084 / PH-1) (Wheat head blight fungus).